The sequence spans 357 residues: Pre-mRNA-splicing factor RBM22 homolog (357 aa).

The C3H1-type zinc finger occupies 153 to 180 (RNMARVCSFWRKNSCNRGDECPYLHKEI). The region spanning 222 to 295 (NKICIQGISE…CNLTVHLQDN (74 aa)) is the RRM domain.

The protein belongs to the SLT11 family. As to quaternary structure, probable component of the spliceosome C complex.

Its subcellular location is the nucleus. In terms of biological role, involved in pre-mRNA splicing. Binds RNA. This chain is Pre-mRNA-splicing factor RBM22 homolog, found in Plasmodium falciparum (isolate 3D7).